The primary structure comprises 350 residues: Olfactory receptor 52I2 (350 aa).

Over 1–55 (MCQQILRDCILLIHHLCINRKKVSLVMLGPAYNHTMETPASFLLVGIPGLQSSHL) the chain is Extracellular. Residue asparagine 33 is glycosylated (N-linked (GlcNAc...) asparagine). A helical transmembrane segment spans residues 56-76 (WLAISLSAMYIIALLGNTIIV). Over 77–84 (TAIWMDST) the chain is Cytoplasmic. A helical membrane pass occupies residues 85–105 (RHEPMYCFLCVLAAVDIVMAS). Residues 106–129 (SVVPKMVSIFCSGDSSISFSACFT) lie on the Extracellular side of the membrane. Cysteine 127 and cysteine 219 are oxidised to a cystine. A helical membrane pass occupies residues 130-150 (QMFFVHLATAVETGLLLTMAF). Over 151–169 (DRYVAICKPLHYKRILTPQ) the chain is Cytoplasmic. A helical membrane pass occupies residues 170 to 190 (VMLGMSMAITIRAIIAITPLS). The Extracellular portion of the chain corresponds to 191–226 (WMVSHLPFCGSNVVVHSYCEHIALARLACADPVPSS). Residues 227–247 (LYSLIGSSLMVGSDVAFIAAS) traverse the membrane as a helical segment. Topologically, residues 248–267 (YILILKAVFGLSSKTAQLKA) are cytoplasmic. The chain crosses the membrane as a helical span at residues 268 to 288 (LSTCGSHVGVMALYYLPGMAS). Over 289–304 (IYAAWLGQDVVPLHTQ) the chain is Extracellular. The chain crosses the membrane as a helical span at residues 305 to 325 (VLLADLYVIIPATLNPIIYGM). The Cytoplasmic portion of the chain corresponds to 326–350 (RTKQLRERIWSYLMHVLFDHSNLGS).

The protein belongs to the G-protein coupled receptor 1 family.

It localises to the cell membrane. Odorant receptor. The chain is Olfactory receptor 52I2 (OR52I2) from Homo sapiens (Human).